Here is a 73-residue protein sequence, read N- to C-terminus: Mitofissin (73 aa).

It belongs to the ?ATG44? family. In terms of assembly, homooligomer. Found as homooctamer in solution, but binds to membranes either as a monomer, dimer, or tetramer, not as an octamer.

It localises to the mitochondrion intermembrane space. Its subcellular location is the vacuole. In terms of biological role, mitochondrial fission factor that acts directly on lipid membranes to drive mitochondrial fission required for mitophagy. Directly binds to lipid membranes and brings about lipid membrane fragility to facilitate membrane fission and engulfment of mitochondria by the phagophore. The polypeptide is Mitofissin (Saccharomyces cerevisiae (strain ATCC 204508 / S288c) (Baker's yeast)).